Here is a 926-residue protein sequence, read N- to C-terminus: MALKSPAFRKKFPLLVTGSLLAMQPLATQFVVAAEQYDCSVSASGAWNCAPKSNAAAVDLPPRPVHDTTSVSSNGTVTSQSTSSGEQVAGTQLVTEAKGKGLRSRSADYSHLDWVPREKLTAAQLAETGPYCSGAYVEPIRPGMDDKTPMKDAPMFVGAKASRYEQEAQVATLAGDVVLRQGSMQVQAQEAALHQAENRGELNGDVRLRDNGALIVGDKAELQLDTGEARVDNAEYVLHKSNIRGNALYAKRAENAIIRLKDGTYTTCEPNSNAWTLKGNNITLNPATGFGTATNVTLRVKDIPVLYTPYIYFPIDDRRQSGFLPPTIAAGGDNGFTLVTPYYFNLAPNYDATLYPRYMADRGLLMEGEFRYLTKGSEGQFGGAYLNDENDDRKLQSDYDKTRWMINWQHKGGLDTRWLTQVDYTDISDPYYFQDLETDQIGVKRTDFLNQQGSLTYRGDSYAATLNAQAYKLATVANITPYNRLPQLTLNGTLPYNPGGLKFDYQTEAVRFERDLRSGAFIDEDGNSETRLDNNISGLARANGDRLNLAPSVSLPMNWTYGFLTPKLKYVYTQYALDLDSQGKSSLLAGEEYSSSQSRSVPIFSVDSGLYFDRNTNWFGKDYRQTLEPRLFYLYVPEKDQTDIPVFDTSESTFNYASLFRDNRFTGSDRIGDENKLSLGITNRWIEDNGFERQRFSIGQALYFEDRKVQLPGVVFADRDDARANVSPYALEYEYRFNRDWRFNSDFNWDPDSKSTRSGSAMFHYQPEDNPNKIVNLGYRYRNDQIRYDESTGRWIVGGGDYGRPGDANYVKDYYKIQQHDFSVIWPIVPQWSLISRWQYDYNRERTIEAFGGFEYDNCCWKMRLVNRYWVDYDEFSQAAPQNEKGDRGIFLQIVLKGLGGVTGAKVDSFLDKGIQGYREREDQAF.

The first 22 residues, 1 to 22, serve as a signal peptide directing secretion; it reads MALKSPAFRKKFPLLVTGSLLA. The disordered stretch occupies residues 58-99; sequence VDLPPRPVHDTTSVSSNGTVTSQSTSSGEQVAGTQLVTEAKG. Over residues 68-85 the composition is skewed to low complexity; that stretch reads TTSVSSNGTVTSQSTSSG.

The protein belongs to the LptD family. In terms of assembly, component of the lipopolysaccharide transport and assembly complex. Interacts with LptE and LptA.

It localises to the cell outer membrane. Together with LptE, is involved in the assembly of lipopolysaccharide (LPS) at the surface of the outer membrane. The sequence is that of LPS-assembly protein LptD from Pseudomonas savastanoi pv. phaseolicola (strain 1448A / Race 6) (Pseudomonas syringae pv. phaseolicola (strain 1448A / Race 6)).